The following is a 427-amino-acid chain: Trigger factor (427 aa).

Residues 163–248 (GDTVVIDFVG…IHEVKTKEVP (86 aa)) enclose the PPIase FKBP-type domain.

It belongs to the FKBP-type PPIase family. Tig subfamily.

Its subcellular location is the cytoplasm. The catalysed reaction is [protein]-peptidylproline (omega=180) = [protein]-peptidylproline (omega=0). Its function is as follows. Involved in protein export. Acts as a chaperone by maintaining the newly synthesized protein in an open conformation. Functions as a peptidyl-prolyl cis-trans isomerase. The chain is Trigger factor from Streptococcus pyogenes serotype M49 (strain NZ131).